Consider the following 173-residue polypeptide: U4/U6.U5 small nuclear ribonucleoprotein component snu23 (173 aa).

A Matrin-type zinc finger spans residues 55–85 (WYCEACNETYKDSLSWLDHLNSTQHLRKTRT). The stretch at 119 to 149 (SLKERVERYHQELEAKKLRRKQKKVNKEKNS) forms a coiled coil.

In terms of assembly, component of the 25S U4/U6.U5 tri-snRNP particle, a subcomplex of the spliceosome.

It is found in the cytoplasm. Its subcellular location is the cytoskeleton. The protein localises to the microtubule organizing center. The protein resides in the spindle pole body. It localises to the nucleus. This is U4/U6.U5 small nuclear ribonucleoprotein component snu23 (snu23) from Schizosaccharomyces pombe (strain 972 / ATCC 24843) (Fission yeast).